A 444-amino-acid chain; its full sequence is tRNA-2-methylthio-N(6)-dimethylallyladenosine synthase (444 aa).

Positions 6 to 124 (KTFKIITYGC…LPQLIEEIKA (119 aa)) constitute an MTTase N-terminal domain. Cys-15, Cys-51, Cys-85, Cys-161, Cys-165, and Cys-168 together coordinate [4Fe-4S] cluster. Positions 147–377 (RARGAQAFVT…MELQNSISLA (231 aa)) constitute a Radical SAM core domain. Positions 380–443 (EALVGQEVEV…TWLLKGEMVD (64 aa)) constitute a TRAM domain.

It belongs to the methylthiotransferase family. MiaB subfamily. In terms of assembly, monomer. It depends on [4Fe-4S] cluster as a cofactor.

It localises to the cytoplasm. The enzyme catalyses N(6)-dimethylallyladenosine(37) in tRNA + (sulfur carrier)-SH + AH2 + 2 S-adenosyl-L-methionine = 2-methylsulfanyl-N(6)-dimethylallyladenosine(37) in tRNA + (sulfur carrier)-H + 5'-deoxyadenosine + L-methionine + A + S-adenosyl-L-homocysteine + 2 H(+). Catalyzes the methylthiolation of N6-(dimethylallyl)adenosine (i(6)A), leading to the formation of 2-methylthio-N6-(dimethylallyl)adenosine (ms(2)i(6)A) at position 37 in tRNAs that read codons beginning with uridine. The chain is tRNA-2-methylthio-N(6)-dimethylallyladenosine synthase from Moorella thermoacetica (strain ATCC 39073 / JCM 9320).